A 451-amino-acid chain; its full sequence is Phosphoglucosamine mutase (451 aa).

Residue Ser-102 is the Phosphoserine intermediate of the active site. Residues Ser-102, Asp-242, Asp-244, and Asp-246 each contribute to the Mg(2+) site. Ser-102 carries the phosphoserine modification.

This sequence belongs to the phosphohexose mutase family. Mg(2+) is required as a cofactor. Post-translationally, activated by phosphorylation.

The enzyme catalyses alpha-D-glucosamine 1-phosphate = D-glucosamine 6-phosphate. In terms of biological role, catalyzes the conversion of glucosamine-6-phosphate to glucosamine-1-phosphate. In Staphylococcus aureus (strain bovine RF122 / ET3-1), this protein is Phosphoglucosamine mutase.